The chain runs to 137 residues: Leaf-specific thionin (137 aa).

The N-terminal stretch at 1 to 28 (MATNKSIKSVVICVLILGLVLEQVQVEA) is a signal peptide. 4 cysteine pairs are disulfide-bonded: C31/C68, C32/C60, C40/C58, and C44/C54. A propeptide spans 75 to 137 (LNLLPESGEP…DGEVIQSVEA (63 aa)) (acidic domain).

Belongs to the plant thionin (TC 1.C.44) family. 4 C-C subfamily.

It localises to the secreted. Thionins are small plant proteins which are toxic to animal cells. They seem to exert their toxic effect at the level of the cell membrane. Their precise function is not known. This chain is Leaf-specific thionin (THI1.5), found in Hordeum vulgare (Barley).